Reading from the N-terminus, the 199-residue chain is V-type ATP synthase subunit E (199 aa).

It belongs to the V-ATPase E subunit family.

Produces ATP from ADP in the presence of a proton gradient across the membrane. The chain is V-type ATP synthase subunit E from Clostridium botulinum (strain Hall / ATCC 3502 / NCTC 13319 / Type A).